Here is a 372-residue protein sequence, read N- to C-terminus: Spermidine/putrescine import ATP-binding protein PotA (372 aa).

Residues 11–241 (IELRSIKKSY…PANLFVARFI (231 aa)) form the ABC transporter domain. 43-50 (GPSGCGKT) provides a ligand contact to ATP.

The protein belongs to the ABC transporter superfamily. Spermidine/putrescine importer (TC 3.A.1.11.1) family. As to quaternary structure, the complex is composed of two ATP-binding proteins (PotA), two transmembrane proteins (PotB and PotC) and a solute-binding protein (PotD).

It is found in the cell inner membrane. It carries out the reaction ATP + H2O + polyamine-[polyamine-binding protein]Side 1 = ADP + phosphate + polyamineSide 2 + [polyamine-binding protein]Side 1.. Its function is as follows. Part of the ABC transporter complex PotABCD involved in spermidine/putrescine import. Responsible for energy coupling to the transport system. The protein is Spermidine/putrescine import ATP-binding protein PotA of Haemophilus influenzae (strain 86-028NP).